A 518-amino-acid polypeptide reads, in one-letter code: Serine incorporator 4 (518 aa).

The next 10 membrane-spanning stretches (helical) occupy residues 59-79 (CSRL…CLLL), 122-142 (VCAG…HLHS), 153-173 (SFWL…FCIP), 184-204 (IGIC…TAFA), 222-242 (FLAV…GAVL), 259-279 (LLSL…APCI), 286-306 (SGLL…FSAL), 338-357 (ISLA…FACN), 427-447 (AFHF…TNWF), and 470-490 (VASC…PLCW).

This sequence belongs to the TDE1 family.

Its subcellular location is the membrane. Incorporates a polar amino acid serine into membranes and facilitates the synthesis of two serine-derived lipids, phosphatidylserine and sphingolipids. The chain is Serine incorporator 4 (SERINC4) from Homo sapiens (Human).